Here is a 136-residue protein sequence, read N- to C-terminus: DNA-directed RNA polymerase subunit omega (136 aa).

The protein belongs to the RNA polymerase subunit omega family. As to quaternary structure, the RNAP catalytic core consists of 2 alpha, 1 beta, 1 beta' and 1 omega subunit. When a sigma factor is associated with the core the holoenzyme is formed, which can initiate transcription.

The catalysed reaction is RNA(n) + a ribonucleoside 5'-triphosphate = RNA(n+1) + diphosphate. Its function is as follows. Promotes RNA polymerase assembly. Latches the N- and C-terminal regions of the beta' subunit thereby facilitating its interaction with the beta and alpha subunits. The polypeptide is DNA-directed RNA polymerase subunit omega (Methylorubrum extorquens (strain CM4 / NCIMB 13688) (Methylobacterium extorquens)).